A 396-amino-acid chain; its full sequence is Serine/threonine-protein kinase GRIK1 (396 aa).

The tract at residues 22 to 65 (ERSRHSPNPYDDDTYSHDSGETSNPGGDDEEGEEEEEVEELSRS) is disordered. The segment covering 48 to 60 (GDDEEGEEEEEVE) has biased composition (acidic residues). Positions 108–369 (FVRERKIGSG…LKAVAEHPWI (262 aa)) constitute a Protein kinase domain. Residues 114-122 (IGSGSYGKV) and Lys-137 each bind ATP. Thr-154 is modified (phosphothreonine; by autocatalysis). The Proton acceptor role is filled by Asp-239. Ser-261 bears the Phosphoserine; by KIN10 mark.

This sequence belongs to the protein kinase superfamily. Ser/Thr protein kinase family. In terms of assembly, associates with the SNF1-related protein kinase (SnRK) complex. Interacts with AL1, a geminivirus (TGMV) protein essential for viral replication. As to expression, expressed in shoot apical meristem, leaf primordium and emerging petiole (at protein level).

It localises to the cytoplasm. Its subcellular location is the nucleus. The enzyme catalyses L-seryl-[protein] + ATP = O-phospho-L-seryl-[protein] + ADP + H(+). It carries out the reaction L-threonyl-[protein] + ATP = O-phospho-L-threonyl-[protein] + ADP + H(+). Its activity is regulated as follows. Activated when autophosphorylated at Thr-154 and inactivated when phosphorylated at Ser-261 by SnRK1.1/KIN10. Functionally, activates SnRK1.1/KIN10 and SnRK1.2/KIN11 by phosphorylation of their activation-loop 'Thr-198' and 'Thr-176', respectively. Required for the regulation by SnRK1 kinases of the transcription of a large set of genes, the modification the activity of metabolic enzymes, and the control of various nutrient-responsive cellular developmental processes. This Arabidopsis thaliana (Mouse-ear cress) protein is Serine/threonine-protein kinase GRIK1 (GRIK1).